Reading from the N-terminus, the 56-residue chain is uncharacterized protein (56 aa).

This is an uncharacterized protein from Escherichia coli (Bacteriophage T4).